Reading from the N-terminus, the 269-residue chain is Aquaporin-7 (269 aa).

Over 1–20 (MAGSVLENIQSVLQKTWVRE) the chain is Cytoplasmic. Phosphoserine is present on Ser-4. A helical membrane pass occupies residues 21–38 (FLAEFLSTYVLMVFGLGS). The Extracellular portion of the chain corresponds to 39–51 (VAHMVLGERLGSY). A helical transmembrane segment spans residues 52 to 69 (LGVNLGFGFGVTMGIHVA). Residues 70–73 (GGIS) lie on the Cytoplasmic side of the membrane. The segment at residues 74–87 (GAHMNAAVTFTNCA) is an intramembrane region (discontinuously helical). The NPA 1 motif lies at 78-80 (NAA). Topologically, residues 88-95 (LGRMAWKK) are cytoplasmic. A helical membrane pass occupies residues 96–116 (FPIYVLGQFLGSFLAAATTYL). Residues 117–151 (IFYGAINHYAGGELLVTGPKSTANIFATYLPEHMT) lie on the Extracellular side of the membrane. The helical transmembrane segment at 152-172 (LWRGFVDEVFVTGMLQLCIFA) threads the bilayer. Over 173–184 (ITDKLNSPALQG) the chain is Cytoplasmic. Residues 185 to 201 (TEPLMIGILVCVLGVSL) traverse the membrane as a helical segment. Topologically, residues 202–205 (GMNT) are extracellular. The discontinuously helical intramembrane region spans 206-219 (GYAINPSRDLPPRF). The short motif at 210-212 (NPS) is the NPA 2 element. At 220-237 (FTFIAGWGKKVFSAGNNW) the chain is on the extracellular side. A helical transmembrane segment spans residues 238-259 (WWVPVVAPLLGAYLGGIVYLGL). Over 260–269 (IHAGIPPQGS) the chain is Cytoplasmic.

It belongs to the MIP/aquaporin (TC 1.A.8) family. As to quaternary structure, homotetramer; each monomer provides an independent glycerol/water pore. Two homotetramers on opposing membranes can dimerize, forming a cell-cell junction. Interacts with PLIN1. In terms of processing, phosphorylation by PKA could prevent the interaction with PLIN1. Detected in heart, kidney and testis.

The protein localises to the cell membrane. Its subcellular location is the cytoplasmic vesicle membrane. It is found in the lipid droplet. The enzyme catalyses glycerol(in) = glycerol(out). It catalyses the reaction H2O(in) = H2O(out). The catalysed reaction is urea(in) = urea(out). With respect to regulation, glycerol transport is regulated by pH, with the porin being permeable to glycerol at pH 7.4 but not at pH 5.5. Water permeability, however, is not influenced by pH. Not inhibited by mercury ions. In terms of biological role, aquaglyceroporins form homotetrameric transmembrane channels, with each monomer independently mediating glycerol and water transport across the plasma membrane along their osmotic gradient. Could also be permeable to urea. Mediates the efflux of glycerol, formed upon triglyceride hydrolysis, to avoid its accumulation in adipocytes and to make it available to other tissues. In the kidney, mediates the reabsorption of glycerol, preventing its loss in urine, again participating to energy homeostasis. In pancreatic beta cells, it also mediates the efflux of glycerol, regulating its intracellular levels. This Rattus norvegicus (Rat) protein is Aquaporin-7.